The chain runs to 568 residues: Serine/threonine-protein kinase WNK2 (568 aa).

Residues 24–281 enclose the Protein kinase domain; that stretch reads GRYDEILGKG…ALELLQDPFL (258 aa). Residues 104–107 and Lys154 contribute to the ATP site; that span reads TELF. Residue Asp171 is the Proton acceptor of the active site. Residues 453–473 form a disordered region; the sequence is SSGEKSHHNHHEFDSSEDKSC. The segment covering 463–472 has biased composition (basic and acidic residues); it reads HEFDSSEDKS.

It belongs to the protein kinase superfamily. Ser/Thr protein kinase family. WNK subfamily. In terms of processing, autophosphorylated.

The enzyme catalyses L-seryl-[protein] + ATP = O-phospho-L-seryl-[protein] + ADP + H(+). It catalyses the reaction L-threonyl-[protein] + ATP = O-phospho-L-threonyl-[protein] + ADP + H(+). Regulates flowering time by modulating the photoperiod pathway. Possesses kinase activity in vitro. This Arabidopsis thaliana (Mouse-ear cress) protein is Serine/threonine-protein kinase WNK2 (WNK2).